The primary structure comprises 339 residues: Undecaprenyl-phosphate 4-deoxy-4-formamido-L-arabinose transferase (339 aa).

Transmembrane regions (helical) follow at residues 235–255 (LSLV…FLLV) and 269–289 (LFVL…GMGL).

Belongs to the glycosyltransferase 2 family.

The protein localises to the cell inner membrane. The catalysed reaction is UDP-4-deoxy-4-formamido-beta-L-arabinose + di-trans,octa-cis-undecaprenyl phosphate = 4-deoxy-4-formamido-alpha-L-arabinopyranosyl di-trans,octa-cis-undecaprenyl phosphate + UDP. It functions in the pathway glycolipid biosynthesis; 4-amino-4-deoxy-alpha-L-arabinose undecaprenyl phosphate biosynthesis; 4-amino-4-deoxy-alpha-L-arabinose undecaprenyl phosphate from UDP-4-deoxy-4-formamido-beta-L-arabinose and undecaprenyl phosphate: step 1/2. It participates in bacterial outer membrane biogenesis; lipopolysaccharide biosynthesis. Catalyzes the transfer of 4-deoxy-4-formamido-L-arabinose from UDP to undecaprenyl phosphate. The modified arabinose is attached to lipid A and is required for resistance to polymyxin and cationic antimicrobial peptides. In Pseudomonas aeruginosa (strain UCBPP-PA14), this protein is Undecaprenyl-phosphate 4-deoxy-4-formamido-L-arabinose transferase.